Here is a 257-residue protein sequence, read N- to C-terminus: Imidazole glycerol phosphate synthase subunit HisF (257 aa).

Catalysis depends on residues D12 and D131.

The protein belongs to the HisA/HisF family. Heterodimer of HisH and HisF.

It is found in the cytoplasm. The catalysed reaction is 5-[(5-phospho-1-deoxy-D-ribulos-1-ylimino)methylamino]-1-(5-phospho-beta-D-ribosyl)imidazole-4-carboxamide + L-glutamine = D-erythro-1-(imidazol-4-yl)glycerol 3-phosphate + 5-amino-1-(5-phospho-beta-D-ribosyl)imidazole-4-carboxamide + L-glutamate + H(+). It participates in amino-acid biosynthesis; L-histidine biosynthesis; L-histidine from 5-phospho-alpha-D-ribose 1-diphosphate: step 5/9. Its function is as follows. IGPS catalyzes the conversion of PRFAR and glutamine to IGP, AICAR and glutamate. The HisF subunit catalyzes the cyclization activity that produces IGP and AICAR from PRFAR using the ammonia provided by the HisH subunit. This Burkholderia lata (strain ATCC 17760 / DSM 23089 / LMG 22485 / NCIMB 9086 / R18194 / 383) protein is Imidazole glycerol phosphate synthase subunit HisF.